We begin with the raw amino-acid sequence, 412 residues long: Proteasome-activating nucleotidase (412 aa).

The stretch at 15 to 73 (EDIYQYLLERITNLENRNLELREQFRQMESEKRYVETQKIRYERELRKLKSEIEQLRSP) forms a coiled coil. ATP-binding positions include 197-202 (GTGKTL) and histidine 336. A docks into pockets in the proteasome alpha-ring to cause gate opening region spans residues 410 to 412 (MFA).

This sequence belongs to the AAA ATPase family. Homohexamer. The hexameric complex has a two-ring architecture resembling a top hat that caps the 20S proteasome core at one or both ends. Upon ATP-binding, the C-terminus of PAN interacts with the alpha-rings of the proteasome core by binding to the intersubunit pockets.

It is found in the cytoplasm. In terms of biological role, ATPase which is responsible for recognizing, binding, unfolding and translocation of substrate proteins into the archaeal 20S proteasome core particle. Is essential for opening the gate of the 20S proteasome via an interaction with its C-terminus, thereby allowing substrate entry and access to the site of proteolysis. Thus, the C-termini of the proteasomal ATPase function like a 'key in a lock' to induce gate opening and therefore regulate proteolysis. Unfolding activity requires energy from ATP hydrolysis, whereas ATP binding alone promotes ATPase-20S proteasome association which triggers gate opening, and supports translocation of unfolded substrates. The polypeptide is Proteasome-activating nucleotidase (Methanoculleus marisnigri (strain ATCC 35101 / DSM 1498 / JR1)).